The primary structure comprises 618 residues: Prothrombin (618 aa).

Residues Met-1–Ser-24 form the signal peptide. The propeptide occupies Gln-25–Arg-43. The region spanning Ala-44–Val-90 is the Gla domain. 10 positions are modified to 4-carboxyglutamate: Glu-50, Glu-51, Glu-58, Glu-60, Glu-63, Glu-64, Glu-69, Glu-70, Glu-73, and Glu-76. Cys-61 and Cys-66 are disulfide-bonded. Disulfide bonds link Cys-91–Cys-104, Cys-109–Cys-187, Cys-130–Cys-170, Cys-158–Cys-182, Cys-215–Cys-293, Cys-236–Cys-276, Cys-264–Cys-288, Cys-333–Cys-479, Cys-388–Cys-404, and Cys-533–Cys-547. 2 consecutive Kringle domains span residues Cys-109–Cys-187 and Cys-215–Tyr-292. Residues Asn-122 and Asn-144 are each glycosylated (N-linked (GlcNAc...) asparagine). In terms of domain architecture, Peptidase S1 spans Ile-361–Asp-615. The active-site Charge relay system is His-403. The N-linked (GlcNAc...) asparagine glycan is linked to Asn-413. Residue Asp-459 is the Charge relay system of the active site. The tract at residues Ala-548 to Val-570 is high affinity receptor-binding region which is also known as the TP508 peptide. The N-linked (GlcNAc...) asparagine glycan is linked to Asn-553. Cys-561 and Cys-591 are disulfide-bonded. Ser-565 acts as the Charge relay system in catalysis.

It belongs to the peptidase S1 family. Heterodimer (named alpha-thrombin) of a light and a heavy chain; disulfide-linked. Forms a heterodimer with SERPINA5. In plasma, interacts (via N-terminus) with alpha-1-microglobulin; this interaction does not prevent the activation of prothrombin to thrombin. The gamma-carboxyglutamyl residues, which bind calcium ions, result from the carboxylation of glutamyl residues by a microsomal enzyme, the vitamin K-dependent carboxylase. The modified residues are necessary for the calcium-dependent interaction with a negatively charged phospholipid surface, which is essential for the conversion of prothrombin to thrombin. In terms of processing, in the penultimate step of the coagulation cascade, prothrombin is converted to thrombin by the prothrombinase complex composed of factor Xa (F10), cofactor Va (F5), and phospholipids. This activation requires factor Xa-catalyzed sequential cleavage at 2 sites, Arg-311 and Arg-360, along 2 possible pathways. In the first pathway, the first cleavage occurs at Arg-311, leading to the formation of the inactive intermediate prethrombin-2. This pathway preferentially occurs on platelets and in the absence of cofactor Va. In the second pathway, the first cleavage occurs at Arg-360, which separates protease domain into 2 chains that remain connected through a disulfide bond and generates the active intermediate meizothrombin. The presence of cofactor Va directs activation along the meizothrombin pathway and greatly accelerates the rate of cleavage at Arg-360, but has a smaller effect on the cleavage of meizothrombin at Arg-311. Meizothrombin accumulates as an intermediate when prothrombinase is assembled on the membrane of red blood cells.

The enzyme catalyses Selective cleavage of Arg-|-Gly bonds in fibrinogen to form fibrin and release fibrinopeptides A and B.. Activity is promoted in the presence of negatively charged surfaces, such as polyphosphate and dextran sulfate. Inhibited by SERPINA5. Functionally, thrombin, which cleaves bonds after Arg and Lys, converts fibrinogen to fibrin and activates factors V, VII, VIII, XIII, and, in complex with thrombomodulin, protein C. Functions in blood homeostasis, inflammation and wound healing. Activates coagulation factor XI (F11); activation is promoted by the contact with negatively charged surfaces. Triggers the production of pro-inflammatory cytokines, such as MCP-1/CCL2 and IL8/CXCL8, in endothelial cells. This is Prothrombin (F2) from Mus musculus (Mouse).